A 216-amino-acid chain; its full sequence is Holliday junction branch migration complex subunit RuvA (216 aa).

Residues 1-64 (MISFIKGVLI…EDAQQLYGFK (64 aa)) form a domain I region. The segment at 65-143 (SKVDKKVFQE…KMANEIYAQT (79 aa)) is domain II. The flexible linker stretch occupies residues 144 to 163 (SGTTTTSQDSQAQQAPTSVV). Residues 164 to 216 (LANSIFNESVDALLALGYKQKDAEKMARSAMGDATTAAEVIRKALQGSIKSKR) form a domain III region.

Belongs to the RuvA family. In terms of assembly, homotetramer. Forms an RuvA(8)-RuvB(12)-Holliday junction (HJ) complex. HJ DNA is sandwiched between 2 RuvA tetramers; dsDNA enters through RuvA and exits via RuvB. An RuvB hexamer assembles on each DNA strand where it exits the tetramer. Each RuvB hexamer is contacted by two RuvA subunits (via domain III) on 2 adjacent RuvB subunits; this complex drives branch migration. In the full resolvosome a probable DNA-RuvA(4)-RuvB(12)-RuvC(2) complex forms which resolves the HJ.

The protein localises to the cytoplasm. Its function is as follows. The RuvA-RuvB-RuvC complex processes Holliday junction (HJ) DNA during genetic recombination and DNA repair, while the RuvA-RuvB complex plays an important role in the rescue of blocked DNA replication forks via replication fork reversal (RFR). RuvA specifically binds to HJ cruciform DNA, conferring on it an open structure. The RuvB hexamer acts as an ATP-dependent pump, pulling dsDNA into and through the RuvAB complex. HJ branch migration allows RuvC to scan DNA until it finds its consensus sequence, where it cleaves and resolves the cruciform DNA. This chain is Holliday junction branch migration complex subunit RuvA, found in Francisella tularensis subsp. tularensis (strain WY96-3418).